Reading from the N-terminus, the 357-residue chain is Protein MGF 360-8L (357 aa).

It belongs to the asfivirus MGF 360 family.

Plays a role in virus cell tropism, and may be required for efficient virus replication in macrophages. This chain is Protein MGF 360-8L, found in African swine fever virus (isolate Tick/South Africa/Pretoriuskop Pr4/1996) (ASFV).